The following is a 119-amino-acid chain: Ribonuclease P protein component (119 aa).

It belongs to the RnpA family. As to quaternary structure, consists of a catalytic RNA component (M1 or rnpB) and a protein subunit.

The enzyme catalyses Endonucleolytic cleavage of RNA, removing 5'-extranucleotides from tRNA precursor.. In terms of biological role, RNaseP catalyzes the removal of the 5'-leader sequence from pre-tRNA to produce the mature 5'-terminus. It can also cleave other RNA substrates such as 4.5S RNA. The protein component plays an auxiliary but essential role in vivo by binding to the 5'-leader sequence and broadening the substrate specificity of the ribozyme. This chain is Ribonuclease P protein component, found in Chlamydia muridarum (strain MoPn / Nigg).